Reading from the N-terminus, the 164-residue chain is SsrA-binding protein (164 aa).

The disordered stretch occupies residues 141 to 164 (KLHDKRQDEKQKSIKREINSALKR). Over residues 145–158 (KRQDEKQKSIKREI) the composition is skewed to basic and acidic residues.

It belongs to the SmpB family.

It is found in the cytoplasm. Functionally, required for rescue of stalled ribosomes mediated by trans-translation. Binds to transfer-messenger RNA (tmRNA), required for stable association of tmRNA with ribosomes. tmRNA and SmpB together mimic tRNA shape, replacing the anticodon stem-loop with SmpB. tmRNA is encoded by the ssrA gene; the 2 termini fold to resemble tRNA(Ala) and it encodes a 'tag peptide', a short internal open reading frame. During trans-translation Ala-aminoacylated tmRNA acts like a tRNA, entering the A-site of stalled ribosomes, displacing the stalled mRNA. The ribosome then switches to translate the ORF on the tmRNA; the nascent peptide is terminated with the 'tag peptide' encoded by the tmRNA and targeted for degradation. The ribosome is freed to recommence translation, which seems to be the essential function of trans-translation. The chain is SsrA-binding protein from Prochlorococcus marinus (strain MIT 9215).